Consider the following 336-residue polypeptide: MPVLNLNDPQAVERYEEFMRQSPYGQVTQDLGWAKVKNNWEPVDVYLEDDQGAIIAAMSMLLGDTPTDKKFAYASKGPVMDVTDVDLLDRLVDEAVKALDGRAYVLRFDPEVAYSDEFNTTLQDHGYVTRNRNVADAGMHATIQPRLNMVLDLTKFPDAKTTLDLYPSKTKSKIKRPFRDGVEVHSGNSATELDEFFKTYTTMAERHGITHRPIEYFQRMQAAFDADTMRIFVAEREGKLLSTGIALKYGRKIWYMYAGSMDGNTYYAPYAVQSEMIQWALDTNTDLYDLGGIESESTDDSLYVFKHVFVKDAPREYIGEIDKVLDPEVYAELVKD.

Substrate contacts are provided by residues 37–40, tyrosine 104, arginine 212, tyrosine 216, and tyrosine 257; that span reads KNNW.

Belongs to the FemABX family.

It carries out the reaction UDP-N-acetyl-alpha-D-muramoyl-L-alanyl-gamma-D-glutamyl-L-lysyl-D-alanyl-D-alanine + L-alanyl-tRNA(Ala) = UDP-N-acetyl-alpha-D-muramoyl-L-alanyl-gamma-D-glutamyl-N(6)-(L-alanyl)-L-lysyl-D-alanyl-D-alanine + tRNA(Ala) + H(+). Involved in the synthesis of the bacterial cell wall. Catalyzes the addition of alanine into the interchain peptide bridge of peptidoglycan precursor using aminoacyl-tRNA(Ala) as amino acid donor. This alanine is added to the epsilon-amino group of the L-lysine of the peptidoglycan UDP-N-acetyl-alpha-D-muramoyl-L-alanyl-D-glutamyl-L-lysyl-D-alanyl-D-alanine, in a ribosome-independent mechanism. Specific for UDP-N-acetyl-muramoyl-pentapeptide. Has no activity toward UDP-N-acetyl-muramoyl-tetrapeptide or UDP-N-acetyl-muramoyl-tripeptide. Also acts on L-seryl-tRNA(Ser). This Weissella viridescens (Lactobacillus viridescens) protein is UDP-N-acetylmuramoylpentapeptide-lysine N(6)-alanyltransferase.